The following is a 488-amino-acid chain: Glutamyl-tRNA(Gln) amidotransferase subunit A (488 aa).

Residues Lys77 and Ser152 each act as charge relay system in the active site. The active-site Acyl-ester intermediate is the Ser176.

It belongs to the amidase family. GatA subfamily. In terms of assembly, heterotrimer of A, B and C subunits.

The enzyme catalyses L-glutamyl-tRNA(Gln) + L-glutamine + ATP + H2O = L-glutaminyl-tRNA(Gln) + L-glutamate + ADP + phosphate + H(+). In terms of biological role, allows the formation of correctly charged Gln-tRNA(Gln) through the transamidation of misacylated Glu-tRNA(Gln) in organisms which lack glutaminyl-tRNA synthetase. The reaction takes place in the presence of glutamine and ATP through an activated gamma-phospho-Glu-tRNA(Gln). The polypeptide is Glutamyl-tRNA(Gln) amidotransferase subunit A (Streptococcus pyogenes serotype M6 (strain ATCC BAA-946 / MGAS10394)).